A 603-amino-acid polypeptide reads, in one-letter code: Granule-bound starch synthase 1, chloroplastic/amyloplastic (603 aa).

A chloroplast-targeting transit peptide spans 1–75 (MATITGSSMP…SEKSLGKIVC (75 aa)). Lysine 91 lines the ADP-alpha-D-glucose pocket.

This sequence belongs to the glycosyltransferase 1 family. Bacterial/plant glycogen synthase subfamily. In terms of tissue distribution, expressed in pods and leaves. No expression in flowers or stipules.

The protein resides in the plastid. The protein localises to the chloroplast. It is found in the amyloplast. The enzyme catalyses an NDP-alpha-D-glucose + [(1-&gt;4)-alpha-D-glucosyl](n) = [(1-&gt;4)-alpha-D-glucosyl](n+1) + a ribonucleoside 5'-diphosphate + H(+). It functions in the pathway glycan biosynthesis; starch biosynthesis. Its function is as follows. May be responsible for the synthesis of amylose. This chain is Granule-bound starch synthase 1, chloroplastic/amyloplastic, found in Pisum sativum (Garden pea).